The chain runs to 250 residues: Tail assembly protein GT (250 aa).

Belongs to the lambda-like tail assembly protein family. Interacts (via C-terminus) with tail tube protein. Interacts (via N-terminus) with the tail assembly protein G and the tape measure protein.

It is found in the host cytoplasm. In terms of biological role, promotes tail assembly by creating a scaffold for the tail tube proteins. Tail assembly proteins G and GT probably wrap the linear tape measure protein to create a tail assembly scaffold. This allows the polymerization of the tail tube protein, during which G and GT are released, therefore they are absent in the mature virion. The tail assembly protein GT is produced by a rare -1 ribosomal frameshift. The ratio of translated G/GT is about 20, and this ratio is important for proper tail assembly. This Escherichia coli (Bacteriophage N15) protein is Tail assembly protein GT.